We begin with the raw amino-acid sequence, 205 residues long: Endoplasmic reticulum membrane protein complex subunit 10 (205 aa).

An N-terminal signal peptide occupies residues 1 to 17 (MLVRLLRVILLASMVFC). At 18–172 (ADILQLSYSD…VKEVSWFQKN (155 aa)) the chain is on the lumenal side. Residue Asn-47 is glycosylated (N-linked (GlcNAc...) asparagine). Residues 173 to 190 (WKMLLLGLLIYNFVAGSA) form a helical membrane-spanning segment. At 191–205 (KKQQQGGAGADQKTE) the chain is on the cytoplasmic side.

As to quaternary structure, component of the ER membrane protein complex (EMC).

It is found in the endoplasmic reticulum membrane. In terms of biological role, part of the endoplasmic reticulum membrane protein complex (EMC) that enables the energy-independent insertion into endoplasmic reticulum membranes of newly synthesized membrane proteins. Preferentially accommodates proteins with transmembrane domains that are weakly hydrophobic or contain destabilizing features such as charged and aromatic residues. Involved in the cotranslational insertion of multi-pass membrane proteins in which stop-transfer membrane-anchor sequences become ER membrane spanning helices. It is also required for the post-translational insertion of tail-anchored/TA proteins in endoplasmic reticulum membranes. By mediating the proper cotranslational insertion of N-terminal transmembrane domains in an N-exo topology, with translocated N-terminus in the lumen of the ER, controls the topology of multi-pass membrane proteins. The chain is Endoplasmic reticulum membrane protein complex subunit 10 from Saccharomyces cerevisiae (strain ATCC 204508 / S288c) (Baker's yeast).